Here is a 61-residue protein sequence, read N- to C-terminus: Short neurotoxin 2 (61 aa).

Cystine bridges form between Cys-3-Cys-23, Cys-17-Cys-40, Cys-42-Cys-53, and Cys-54-Cys-59.

The protein belongs to the three-finger toxin family. Short-chain subfamily. Type I alpha-neurotoxin sub-subfamily. In terms of tissue distribution, expressed by the venom gland.

Its subcellular location is the secreted. Functionally, binds to muscle nicotinic acetylcholine receptor (nAChR) and inhibit acetylcholine from binding to the receptor, thereby impairing neuromuscular transmission. This is Short neurotoxin 2 from Naja annulifera (Banded Egyptian cobra).